We begin with the raw amino-acid sequence, 269 residues long: Polyamine aminopropyltransferase (269 aa).

The PABS domain occupies 1 to 226; the sequence is MVWFFEYYDG…ALWSFIIGGE (226 aa). Position 28 (Q28) interacts with S-methyl-5'-thioadenosine. 2 residues coordinate spermidine: H59 and D83. Residues D102 and 133–134 contribute to the S-methyl-5'-thioadenosine site; that span reads DG. The active-site Proton acceptor is the D150. Residue 150 to 153 participates in spermidine binding; it reads DSTD.

The protein belongs to the spermidine/spermine synthase family. As to quaternary structure, homodimer or homotetramer.

It is found in the cytoplasm. It catalyses the reaction S-adenosyl 3-(methylsulfanyl)propylamine + putrescine = S-methyl-5'-thioadenosine + spermidine + H(+). Its pathway is amine and polyamine biosynthesis; spermidine biosynthesis; spermidine from putrescine: step 1/1. Catalyzes the irreversible transfer of a propylamine group from the amino donor S-adenosylmethioninamine (decarboxy-AdoMet) to putrescine (1,4-diaminobutane) to yield spermidine. The sequence is that of Polyamine aminopropyltransferase from Archaeoglobus fulgidus (strain ATCC 49558 / DSM 4304 / JCM 9628 / NBRC 100126 / VC-16).